The following is a 176-amino-acid chain: Peptidoglycan-associated lipoprotein (176 aa).

Residues 1–32 (MSRIDTPAASRMQTIARNPVMIALVMTLALAG) form the signal peptide. The N-palmitoyl cysteine moiety is linked to residue cysteine 33. Cysteine 33 carries S-diacylglycerol cysteine lipidation. The 118-residue stretch at 58–175 (QQDFTVNVGD…RAVTVLGGAG (118 aa)) folds into the OmpA-like domain.

Belongs to the Pal lipoprotein family. The Tol-Pal system is composed of five core proteins: the inner membrane proteins TolA, TolQ and TolR, the periplasmic protein TolB and the outer membrane protein Pal. They form a network linking the inner and outer membranes and the peptidoglycan layer.

It localises to the cell outer membrane. Its function is as follows. Part of the Tol-Pal system, which plays a role in outer membrane invagination during cell division and is important for maintaining outer membrane integrity. The sequence is that of Peptidoglycan-associated lipoprotein from Rhizobium meliloti (strain 1021) (Ensifer meliloti).